Consider the following 252-residue polypeptide: Phosphoribosylformylglycinamidine synthase subunit PurQ (252 aa).

The Glutamine amidotransferase type-1 domain occupies 6–237 (VGVVVFPGSN…FAHLAGTKRS (232 aa)). Catalysis depends on Cys-89, which acts as the Nucleophile. Residues His-206 and Glu-208 contribute to the active site.

Part of the FGAM synthase complex composed of 1 PurL, 1 PurQ and 2 PurS subunits.

The protein resides in the cytoplasm. The catalysed reaction is N(2)-formyl-N(1)-(5-phospho-beta-D-ribosyl)glycinamide + L-glutamine + ATP + H2O = 2-formamido-N(1)-(5-O-phospho-beta-D-ribosyl)acetamidine + L-glutamate + ADP + phosphate + H(+). It carries out the reaction L-glutamine + H2O = L-glutamate + NH4(+). It functions in the pathway purine metabolism; IMP biosynthesis via de novo pathway; 5-amino-1-(5-phospho-D-ribosyl)imidazole from N(2)-formyl-N(1)-(5-phospho-D-ribosyl)glycinamide: step 1/2. Part of the phosphoribosylformylglycinamidine synthase complex involved in the purines biosynthetic pathway. Catalyzes the ATP-dependent conversion of formylglycinamide ribonucleotide (FGAR) and glutamine to yield formylglycinamidine ribonucleotide (FGAM) and glutamate. The FGAM synthase complex is composed of three subunits. PurQ produces an ammonia molecule by converting glutamine to glutamate. PurL transfers the ammonia molecule to FGAR to form FGAM in an ATP-dependent manner. PurS interacts with PurQ and PurL and is thought to assist in the transfer of the ammonia molecule from PurQ to PurL. This chain is Phosphoribosylformylglycinamidine synthase subunit PurQ, found in Chlorobaculum parvum (strain DSM 263 / NCIMB 8327) (Chlorobium vibrioforme subsp. thiosulfatophilum).